Consider the following 189-residue polypeptide: DAN domain family member 5 (189 aa).

The signal sequence occupies residues 1–22 (MLLGQLSTLLCLLSGALPTGSG). Asn-38 carries N-linked (GlcNAc...) asparagine glycosylation. Cystine bridges form between Cys-101/Cys-148, Cys-115/Cys-162, Cys-125/Cys-183, and Cys-129/Cys-185. The CTCK domain occupies 101 to 186 (CKAVPFVQVF…TMLIEGCHCS (86 aa)).

This sequence belongs to the DAN family. Expressed in the retina, in inner segments of photoreceptors, at or close to the outer plexiform layer and in the ganglion cell layer (at protein level).

It localises to the secreted. Antagonist of the extracellular signaling protein NODAL, which is required for correct left-right patterning during embryonic development. Antagonist of BMP and TGF-beta signaling. Independently of its role in left-right axis establishment, plays a role during heart development, possibly through the regulation of TGF-beta/Nodal signaling pathway. Displays anti-angiogenic activity by inhibiting endothelial sprouting, migration, and proliferation. Once internalized by endothelial cells, may alter their redox and glycolytic balance. The sequence is that of DAN domain family member 5 (DAND5) from Homo sapiens (Human).